A 117-amino-acid chain; its full sequence is Ubiquitin-like protein 3 (117 aa).

Residues 10 to 88 form the Ubiquitin-like domain; it reads INLRLILVSG…PFGKTTVMHL (79 aa). A lipid anchor (S-palmitoyl cysteine) is attached at cysteine 113. Residue cysteine 114 is modified to Cysteine methyl ester. Cysteine 114 is lipidated: S-geranylgeranyl cysteine. Positions 115–117 are cleaved as a propeptide — removed in mature form; that stretch reads VIL.

Its subcellular location is the cell membrane. This Mus musculus (Mouse) protein is Ubiquitin-like protein 3 (Ubl3).